The sequence spans 361 residues: tRNA/tmRNA (uracil-C(5))-methyltransferase (361 aa).

Q185, Y213, N218, E234, and D294 together coordinate S-adenosyl-L-methionine. C319 serves as the catalytic Nucleophile. Catalysis depends on E353, which acts as the Proton acceptor.

This sequence belongs to the class I-like SAM-binding methyltransferase superfamily. RNA M5U methyltransferase family. TrmA subfamily.

It catalyses the reaction uridine(54) in tRNA + S-adenosyl-L-methionine = 5-methyluridine(54) in tRNA + S-adenosyl-L-homocysteine + H(+). It carries out the reaction uridine(341) in tmRNA + S-adenosyl-L-methionine = 5-methyluridine(341) in tmRNA + S-adenosyl-L-homocysteine + H(+). Dual-specificity methyltransferase that catalyzes the formation of 5-methyluridine at position 54 (m5U54) in all tRNAs, and that of position 341 (m5U341) in tmRNA (transfer-mRNA). The sequence is that of tRNA/tmRNA (uracil-C(5))-methyltransferase from Azotobacter vinelandii (strain DJ / ATCC BAA-1303).